A 142-amino-acid chain; its full sequence is HTH-type transcriptional regulator MntR (142 aa).

In terms of domain architecture, HTH dtxR-type spans Met1–Thr63. Mn(2+)-binding residues include Asp8, Glu11, His77, Glu99, Glu102, and His103.

This sequence belongs to the DtxR/MntR family. In terms of assembly, homodimer.

The protein resides in the cytoplasm. DNA binding is strongly activated by Mn(2+). Central regulator of manganese homeostasis. This Listeria monocytogenes serotype 4b (strain F2365) protein is HTH-type transcriptional regulator MntR.